Consider the following 500-residue polypeptide: L-arabinose isomerase (500 aa).

The Mn(2+) site is built by glutamate 306, glutamate 333, histidine 350, and histidine 450.

This sequence belongs to the arabinose isomerase family. As to quaternary structure, homohexamer. Mn(2+) is required as a cofactor.

It carries out the reaction beta-L-arabinopyranose = L-ribulose. It functions in the pathway carbohydrate degradation; L-arabinose degradation via L-ribulose; D-xylulose 5-phosphate from L-arabinose (bacterial route): step 1/3. Catalyzes the conversion of L-arabinose to L-ribulose. The chain is L-arabinose isomerase from Escherichia coli O6:H1 (strain CFT073 / ATCC 700928 / UPEC).